Here is a 537-residue protein sequence, read N- to C-terminus: Atrial natriuretic peptide receptor 3 (537 aa).

Residues 1-20 (MPSLLVLTFSACVLLGWALL) form the signal peptide. A propeptide spanning residues 21–41 (ADCTGGGGSGGAGPGRGRRER) is cleaved from the precursor. Residues 42–477 (EALPPQKIEV…PCKASGGLEE (436 aa)) are Extracellular-facing. N-linked (GlcNAc...) asparagine glycosylation is present at N82. Intrachain disulfides connect C104/C132 and C209/C257. 2 N-linked (GlcNAc...) asparagine glycosylation sites follow: N289 and N390. Residues 478 to 500 (SAVTGIVVGALLGAGLLMAFYFF) traverse the membrane as a helical segment. The Cytoplasmic segment spans residues 501–537 (RKKYRITIERRNQQEESNVGKHRELREDSIRSHFSVA).

This sequence belongs to the ANF receptor family. Homodimer; disulfide-linked. Interacts with OSTN.

The protein localises to the cell membrane. Functionally, receptor for the natriuretic peptide hormones, binding with similar affinities atrial natriuretic peptide NPPA/ANP, brain natriuretic peptide NPPB/BNP, and C-type natriuretic peptide NPPC/CNP. May function as a clearance receptor for NPPA, NPPB and NPPC, regulating their local concentrations and effects. Acts as a regulator of osteoblast differentiation and bone growth by binding to its ligand osteocrin, thereby preventing binding between NPR3/NPR-C and natriuretic peptides, leading to increase cGMP production. The protein is Atrial natriuretic peptide receptor 3 (NPR3) of Bos taurus (Bovine).